The primary structure comprises 303 residues: Ribosomal RNA small subunit methyltransferase H (303 aa).

S-adenosyl-L-methionine is bound by residues 36–38 (CGH), Asp55, Phe81, Asp101, and Gln108.

This sequence belongs to the methyltransferase superfamily. RsmH family.

It is found in the cytoplasm. It carries out the reaction cytidine(1402) in 16S rRNA + S-adenosyl-L-methionine = N(4)-methylcytidine(1402) in 16S rRNA + S-adenosyl-L-homocysteine + H(+). In terms of biological role, specifically methylates the N4 position of cytidine in position 1402 (C1402) of 16S rRNA. The chain is Ribosomal RNA small subunit methyltransferase H from Aster yellows witches'-broom phytoplasma (strain AYWB).